We begin with the raw amino-acid sequence, 283 residues long: UPF0276 protein Nmul_A2550 (283 aa).

It belongs to the UPF0276 family.

The polypeptide is UPF0276 protein Nmul_A2550 (Nitrosospira multiformis (strain ATCC 25196 / NCIMB 11849 / C 71)).